Here is a 414-residue protein sequence, read N- to C-terminus: uncharacterized protein (414 aa).

The Nop domain occupies 246-360; it reads EAPNITKLAG…LNKRVEEIRR (115 aa). The tract at residues 358-414 is disordered; it reads IRRKYPKPPKKKKKEKPKAKKKEKKGKKEKSKKKKDKKKDKKGKKERKVIGKTKSRK. Basic residues predominate over residues 361 to 414; that stretch reads KYPKPPKKKKKEKPKAKKKEKKGKKEKSKKKKDKKKDKKGKKERKVIGKTKSRK.

Belongs to the NOP5/NOP56 family.

This is an uncharacterized protein from Methanocaldococcus jannaschii (strain ATCC 43067 / DSM 2661 / JAL-1 / JCM 10045 / NBRC 100440) (Methanococcus jannaschii).